The following is a 244-amino-acid chain: MSSQDVLIHSDDPCHPANLICTLCKQFFHNNWCTGTGGGISIKDPNTNYYYLAPSGVQKEKMTPEDLFVMDAQTLEYLRSPKLYKPSACTPLFLACYQKKDAGAIIHTHSQNAVICSLVFGDEFRIANIEQIKAIPSGKVDPVTKKPMTLSFFDTLKIPIIENMAHEDELIDDLHKTFKDYPDTCAVIVRRHGIFVWGPTIDKAKIFNEAIDYLMELAIKMYQMGIPPDCGIGEEKKHLKMASP.

Cys-89 is a substrate binding site. Residues His-107 and His-109 each contribute to the Zn(2+) site. Glu-130 acts as the Proton donor/acceptor in catalysis. Residue His-192 participates in Zn(2+) binding.

It belongs to the aldolase class II family. MtnB subfamily. The cofactor is Zn(2+).

The protein resides in the cytoplasm. The catalysed reaction is 5-(methylsulfanyl)-D-ribulose 1-phosphate = 5-methylsulfanyl-2,3-dioxopentyl phosphate + H2O. It participates in amino-acid biosynthesis; L-methionine biosynthesis via salvage pathway; L-methionine from S-methyl-5-thio-alpha-D-ribose 1-phosphate: step 2/6. Functionally, catalyzes the dehydration of methylthioribulose-1-phosphate (MTRu-1-P) into 2,3-diketo-5-methylthiopentyl-1-phosphate (DK-MTP-1-P). This is Methylthioribulose-1-phosphate dehydratase from Saccharomyces cerevisiae (strain YJM789) (Baker's yeast).